The sequence spans 428 residues: Enolase (428 aa).

A (2R)-2-phosphoglycerate-binding site is contributed by Gln-167. Glu-209 serves as the catalytic Proton donor. Residues Asp-246, Glu-288, and Asp-315 each contribute to the Mg(2+) site. Positions 340, 369, 370, and 391 each coordinate (2R)-2-phosphoglycerate. Catalysis depends on Lys-340, which acts as the Proton acceptor.

This sequence belongs to the enolase family. Component of the RNA degradosome, a multiprotein complex involved in RNA processing and mRNA degradation. Mg(2+) is required as a cofactor.

The protein resides in the cytoplasm. Its subcellular location is the secreted. It is found in the cell surface. It carries out the reaction (2R)-2-phosphoglycerate = phosphoenolpyruvate + H2O. It participates in carbohydrate degradation; glycolysis; pyruvate from D-glyceraldehyde 3-phosphate: step 4/5. In terms of biological role, catalyzes the reversible conversion of 2-phosphoglycerate (2-PG) into phosphoenolpyruvate (PEP). It is essential for the degradation of carbohydrates via glycolysis. This is Enolase from Pseudomonas savastanoi pv. phaseolicola (strain 1448A / Race 6) (Pseudomonas syringae pv. phaseolicola (strain 1448A / Race 6)).